Here is an 87-residue protein sequence, read N- to C-terminus: Glutaredoxin (87 aa).

Residues 1–87 form the Glutaredoxin domain; it reads MFVVIFGRPG…YAKENLGLFD (87 aa). A disulfide bridge links Cys11 with Cys14.

The protein belongs to the glutaredoxin family. As to quaternary structure, monomer.

The protein resides in the cytoplasm. Has a glutathione-disulfide oxidoreductase activity in the presence of NADPH and glutathione reductase. Reduces low molecular weight disulfides and proteins. The chain is Glutaredoxin (grx) from Vibrio cholerae serotype O1 (strain ATCC 39315 / El Tor Inaba N16961).